Consider the following 428-residue polypeptide: GTPase Obg (428 aa).

Residues 1–158 (MFVDQVQVEV…RFIKLELKVL (158 aa)) enclose the Obg domain. The region spanning 159 to 333 (ADVGLVGFPS…LMHKTAEVLK (175 aa)) is the OBG-type G domain. Residues 165 to 172 (GFPSVGKS), 190 to 194 (FTTLV), 212 to 215 (DLPG), 282 to 285 (TKMD), and 314 to 316 (SSL) each bind GTP. Mg(2+)-binding residues include serine 172 and threonine 192. Positions 350–428 (YKYQPEPALK…IDDFTFEFVE (79 aa)) constitute an OCT domain.

Belongs to the TRAFAC class OBG-HflX-like GTPase superfamily. OBG GTPase family. Monomer. Mg(2+) serves as cofactor.

Its subcellular location is the cytoplasm. Functionally, an essential GTPase which binds GTP, GDP and possibly (p)ppGpp with moderate affinity, with high nucleotide exchange rates and a fairly low GTP hydrolysis rate. Plays a role in control of the cell cycle, stress response, ribosome biogenesis and in those bacteria that undergo differentiation, in morphogenesis control. This Lacticaseibacillus paracasei (strain ATCC 334 / BCRC 17002 / CCUG 31169 / CIP 107868 / KCTC 3260 / NRRL B-441) (Lactobacillus paracasei) protein is GTPase Obg.